The following is a 209-amino-acid chain: Urease accessory protein UreG (209 aa).

Residue 18 to 25 (GPVGSGKT) participates in GTP binding.

It belongs to the SIMIBI class G3E GTPase family. UreG subfamily. In terms of assembly, homodimer. UreD, UreF and UreG form a complex that acts as a GTP-hydrolysis-dependent molecular chaperone, activating the urease apoprotein by helping to assemble the nickel containing metallocenter of UreC. The UreE protein probably delivers the nickel.

It is found in the cytoplasm. Its function is as follows. Facilitates the functional incorporation of the urease nickel metallocenter. This process requires GTP hydrolysis, probably effectuated by UreG. The polypeptide is Urease accessory protein UreG (Cupriavidus pinatubonensis (strain JMP 134 / LMG 1197) (Cupriavidus necator (strain JMP 134))).